A 190-amino-acid polypeptide reads, in one-letter code: dCTP deaminase, dUMP-forming (190 aa).

Residues lysine 101–arginine 106, aspartate 119, threonine 127–glutamate 129, glutamine 148, tyrosine 162, and glutamine 174 each bind dCTP. Catalysis depends on glutamate 129, which acts as the Proton donor/acceptor. Residues proline 161–aspartate 190 form a disordered region. The span at glycine 163 to aspartate 190 shows a compositional bias: polar residues.

It belongs to the dCTP deaminase family. As to quaternary structure, homotrimer.

The catalysed reaction is dCTP + 2 H2O = dUMP + NH4(+) + diphosphate. It functions in the pathway pyrimidine metabolism; dUMP biosynthesis; dUMP from dCTP: step 1/1. Bifunctional enzyme that catalyzes both the deamination of dCTP to dUTP and the hydrolysis of dUTP to dUMP without releasing the toxic dUTP intermediate. This chain is dCTP deaminase, dUMP-forming, found in Mycolicibacterium vanbaalenii (strain DSM 7251 / JCM 13017 / BCRC 16820 / KCTC 9966 / NRRL B-24157 / PYR-1) (Mycobacterium vanbaalenii).